We begin with the raw amino-acid sequence, 48 residues long: Cathepsin B (48 aa).

It belongs to the peptidase C1 family. As to quaternary structure, dimer of a heavy chain and a light chain cross-linked by a disulfide bond.

It is found in the lysosome. The enzyme catalyses Hydrolysis of proteins with broad specificity for peptide bonds. Preferentially cleaves -Arg-Arg-|-Xaa bonds in small molecule substrates (thus differing from cathepsin L). In addition to being an endopeptidase, shows peptidyl-dipeptidase activity, liberating C-terminal dipeptides.. In terms of biological role, thiol protease which is believed to participate in intracellular degradation and turnover of proteins. Has also been implicated in tumor invasion and metastasis. In Coturnix japonica (Japanese quail), this protein is Cathepsin B (CTSB).